We begin with the raw amino-acid sequence, 1374 residues long: DNA-directed RNA polymerase subunit beta (1374 aa).

The protein belongs to the RNA polymerase beta chain family. In terms of assembly, the RNAP catalytic core consists of 2 alpha, 1 beta, 1 beta' and 1 omega subunit. When a sigma factor is associated with the core the holoenzyme is formed, which can initiate transcription.

The enzyme catalyses RNA(n) + a ribonucleoside 5'-triphosphate = RNA(n+1) + diphosphate. In terms of biological role, DNA-dependent RNA polymerase catalyzes the transcription of DNA into RNA using the four ribonucleoside triphosphates as substrates. This chain is DNA-directed RNA polymerase subunit beta, found in Rhodopseudomonas palustris (strain BisB5).